The sequence spans 284 residues: MPELPEVETVRRGLEPVMTGQRIIEADIRRPDLRWPLPANMQTRLEGKRILRLARRSKYILAELDSGETLIIHLGMSGRILIHGGQAPGAFHHALPSLEKHDHVVLDFDTGARVVFNDARRFGAMDLCETTEIDQHPMLATLGPEPLGNAFHEAYLTTRLKGRMTPIKSALLDQKVVAGLGNIYVCEALFQAGISPLRKAGRVSETRIASLVPIIRTVLGDAIEAGGSSLRDYRQTDGDLGYFQHRFRVYDRENAPCVTAGCPDVVRRVVQSGRSSFYCPSCQR.

Pro-2 serves as the catalytic Schiff-base intermediate with DNA. The Proton donor role is filled by Glu-3. The active-site Proton donor; for beta-elimination activity is the Lys-58. DNA-binding residues include His-101, Arg-120, and Arg-163. The FPG-type zinc finger occupies 248–284; that stretch reads RVYDRENAPCVTAGCPDVVRRVVQSGRSSFYCPSCQR. The active-site Proton donor; for delta-elimination activity is the Arg-274.

It belongs to the FPG family. Monomer. It depends on Zn(2+) as a cofactor.

The catalysed reaction is Hydrolysis of DNA containing ring-opened 7-methylguanine residues, releasing 2,6-diamino-4-hydroxy-5-(N-methyl)formamidopyrimidine.. The enzyme catalyses 2'-deoxyribonucleotide-(2'-deoxyribose 5'-phosphate)-2'-deoxyribonucleotide-DNA = a 3'-end 2'-deoxyribonucleotide-(2,3-dehydro-2,3-deoxyribose 5'-phosphate)-DNA + a 5'-end 5'-phospho-2'-deoxyribonucleoside-DNA + H(+). In terms of biological role, involved in base excision repair of DNA damaged by oxidation or by mutagenic agents. Acts as a DNA glycosylase that recognizes and removes damaged bases. Has a preference for oxidized purines, such as 7,8-dihydro-8-oxoguanine (8-oxoG). Has AP (apurinic/apyrimidinic) lyase activity and introduces nicks in the DNA strand. Cleaves the DNA backbone by beta-delta elimination to generate a single-strand break at the site of the removed base with both 3'- and 5'-phosphates. The sequence is that of Formamidopyrimidine-DNA glycosylase from Dinoroseobacter shibae (strain DSM 16493 / NCIMB 14021 / DFL 12).